A 401-amino-acid polypeptide reads, in one-letter code: Ninja-family protein MODD (401 aa).

Disordered stretches follow at residues 95 to 135 and 215 to 238; these read KQGV…GEGR and TGNKKTGGNVNHSSDRNRCTGLPP. Positions 105-130 are enriched in low complexity; sequence RPSGGAEAEPAAARLPASGSPSSGSS. Residues 217–226 show a composition bias toward polar residues; sequence NKKTGGNVNH.

The protein belongs to the Ninja family. Interacts with BZIP46, TPR3 and PUB70.

It localises to the nucleus. Its function is as follows. Acts as a negative regulator of abscisic acid (ABA) signaling and drought tolerance. Mediates deactivation and degradation of BZIP46, a positive regulator of ABA signaling and drought stress tolerance. Represses BZIP46 activity via interaction with the TPR3-HDAC1 corepressor complex and down-regulation of the histone acetylation level at BZIP46 target genes. Promotes BZIP46 degradation via interaction with the U-box type ubiquitin E3 ligase PUB70. This chain is Ninja-family protein MODD, found in Oryza sativa subsp. japonica (Rice).